A 348-amino-acid chain; its full sequence is tRNA N6-adenosine threonylcarbamoyltransferase (348 aa).

2 residues coordinate Fe cation: His111 and His115. Residues 134–138 (LISGG), Asp167, Gly180, and Asn277 contribute to the substrate site. Asp305 contacts Fe cation.

This sequence belongs to the KAE1 / TsaD family. The cofactor is Fe(2+).

The protein resides in the cytoplasm. The enzyme catalyses L-threonylcarbamoyladenylate + adenosine(37) in tRNA = N(6)-L-threonylcarbamoyladenosine(37) in tRNA + AMP + H(+). Required for the formation of a threonylcarbamoyl group on adenosine at position 37 (t(6)A37) in tRNAs that read codons beginning with adenine. Is involved in the transfer of the threonylcarbamoyl moiety of threonylcarbamoyl-AMP (TC-AMP) to the N6 group of A37, together with TsaE and TsaB. TsaD likely plays a direct catalytic role in this reaction. This chain is tRNA N6-adenosine threonylcarbamoyltransferase, found in Haemophilus ducreyi (strain 35000HP / ATCC 700724).